Here is a 237-residue protein sequence, read N- to C-terminus: Cell division cycle-associated protein 4 (237 aa).

An SERTA domain is found at 26–73; it reads YSLQRQSLLDMSLVKLQLCHMLVEPNLCRSVLIANTVRQIQEEMSQDG.

As to expression, expressed preferentially in hematopoietic progenitors and mature blood cells. Expressed at low levels in the heart, lung, spleen, and thymus and at a higher level in muscle.

It is found in the nucleus. May participate in the regulation of cell proliferation through the E2F/RB pathway. May be involved in molecular regulation of hematopoietic stem cells and progenitor cell lineage commitment and differentiation. The protein is Cell division cycle-associated protein 4 (Cdca4) of Mus musculus (Mouse).